The following is a 251-amino-acid chain: Ribosomal RNA small subunit methyltransferase J (251 aa).

Residues 100–101, 116–117, and Asp-170 each bind S-adenosyl-L-methionine; these read RD and ER.

Belongs to the methyltransferase superfamily. RsmJ family.

Its subcellular location is the cytoplasm. The catalysed reaction is guanosine(1516) in 16S rRNA + S-adenosyl-L-methionine = N(2)-methylguanosine(1516) in 16S rRNA + S-adenosyl-L-homocysteine + H(+). Functionally, specifically methylates the guanosine in position 1516 of 16S rRNA. The protein is Ribosomal RNA small subunit methyltransferase J of Actinobacillus pleuropneumoniae serotype 3 (strain JL03).